We begin with the raw amino-acid sequence, 472 residues long: Lactate utilization protein B (472 aa).

4Fe-4S ferredoxin-type domains are found at residues 304–334 and 353–382; these read GTEF…GHSY and YDDY…LHEL. Residues cysteine 313, cysteine 316, cysteine 319, cysteine 323, cysteine 366, cysteine 369, and cysteine 373 each coordinate [4Fe-4S] cluster.

This sequence belongs to the LutB/YkgF family.

Functionally, is involved in L-lactate degradation and allows cells to grow with lactate as the sole carbon source. Has probably a role as an electron transporter during oxidation of L-lactate. This is Lactate utilization protein B from Anoxybacillus flavithermus (strain DSM 21510 / WK1).